The sequence spans 203 residues: Large ribosomal subunit protein bL25 (203 aa).

Belongs to the bacterial ribosomal protein bL25 family. CTC subfamily. As to quaternary structure, part of the 50S ribosomal subunit; part of the 5S rRNA/L5/L18/L25 subcomplex. Contacts the 5S rRNA. Binds to the 5S rRNA independently of L5 and L18.

In terms of biological role, this is one of the proteins that binds to the 5S RNA in the ribosome where it forms part of the central protuberance. The chain is Large ribosomal subunit protein bL25 from Rickettsia typhi (strain ATCC VR-144 / Wilmington).